A 214-amino-acid chain; its full sequence is ATP phosphoribosyltransferase (214 aa).

It belongs to the ATP phosphoribosyltransferase family. Short subfamily. Heteromultimer composed of HisG and HisZ subunits.

It localises to the cytoplasm. It catalyses the reaction 1-(5-phospho-beta-D-ribosyl)-ATP + diphosphate = 5-phospho-alpha-D-ribose 1-diphosphate + ATP. The protein operates within amino-acid biosynthesis; L-histidine biosynthesis; L-histidine from 5-phospho-alpha-D-ribose 1-diphosphate: step 1/9. Catalyzes the condensation of ATP and 5-phosphoribose 1-diphosphate to form N'-(5'-phosphoribosyl)-ATP (PR-ATP). Has a crucial role in the pathway because the rate of histidine biosynthesis seems to be controlled primarily by regulation of HisG enzymatic activity. This chain is ATP phosphoribosyltransferase, found in Methylobacillus flagellatus (strain ATCC 51484 / DSM 6875 / VKM B-1610 / KT).